Consider the following 349-residue polypeptide: Outer membrane protein assembly factor BamC (349 aa).

The N-terminal stretch at 1-24 is a signal peptide; that stretch reads MAILLQKSKVMKIAGMSLAMLLAA. Residue C25 is the site of N-palmitoyl cysteine attachment. C25 carries S-diacylglycerol cysteine lipidation.

This sequence belongs to the BamC family. As to quaternary structure, part of the Bam complex, which is composed of the outer membrane protein BamA, and four lipoproteins BamB, BamC, BamD and BamE.

It localises to the cell outer membrane. Its function is as follows. Part of the outer membrane protein assembly complex, which is involved in assembly and insertion of beta-barrel proteins into the outer membrane. This Photorhabdus asymbiotica subsp. asymbiotica (strain ATCC 43949 / 3105-77) (Xenorhabdus luminescens (strain 2)) protein is Outer membrane protein assembly factor BamC.